A 353-amino-acid polypeptide reads, in one-letter code: tRNA-cytidine(32) 2-sulfurtransferase (353 aa).

The PP-loop motif motif lies at 49–54; sequence SGGKDS. [4Fe-4S] cluster is bound by residues cysteine 124, cysteine 127, and cysteine 215.

It belongs to the TtcA family. As to quaternary structure, homodimer. Mg(2+) serves as cofactor. [4Fe-4S] cluster is required as a cofactor.

Its subcellular location is the cytoplasm. It carries out the reaction cytidine(32) in tRNA + S-sulfanyl-L-cysteinyl-[cysteine desulfurase] + AH2 + ATP = 2-thiocytidine(32) in tRNA + L-cysteinyl-[cysteine desulfurase] + A + AMP + diphosphate + H(+). The protein operates within tRNA modification. Its function is as follows. Catalyzes the ATP-dependent 2-thiolation of cytidine in position 32 of tRNA, to form 2-thiocytidine (s(2)C32). The sulfur atoms are provided by the cysteine/cysteine desulfurase (IscS) system. The chain is tRNA-cytidine(32) 2-sulfurtransferase from Sodalis glossinidius (strain morsitans).